The chain runs to 372 residues: Glutamate 5-kinase (372 aa).

Residue K9 coordinates ATP. Substrate contacts are provided by S49, D136, and N148. ATP-binding positions include 168–169 and 210–216; these read TD and TGGMKSK. The PUA domain occupies 276 to 360; that stretch reads EGKVFIDDGA…PAIEVIHRDS (85 aa).

It belongs to the glutamate 5-kinase family.

It is found in the cytoplasm. The enzyme catalyses L-glutamate + ATP = L-glutamyl 5-phosphate + ADP. It participates in amino-acid biosynthesis; L-proline biosynthesis; L-glutamate 5-semialdehyde from L-glutamate: step 1/2. Functionally, catalyzes the transfer of a phosphate group to glutamate to form L-glutamate 5-phosphate. The protein is Glutamate 5-kinase of Oceanobacillus iheyensis (strain DSM 14371 / CIP 107618 / JCM 11309 / KCTC 3954 / HTE831).